An 880-amino-acid polypeptide reads, in one-letter code: Alanine--tRNA ligase (880 aa).

Zn(2+)-binding residues include His566, His570, Cys668, and His672.

The protein belongs to the class-II aminoacyl-tRNA synthetase family. Zn(2+) serves as cofactor.

The protein localises to the cytoplasm. The catalysed reaction is tRNA(Ala) + L-alanine + ATP = L-alanyl-tRNA(Ala) + AMP + diphosphate. Catalyzes the attachment of alanine to tRNA(Ala) in a two-step reaction: alanine is first activated by ATP to form Ala-AMP and then transferred to the acceptor end of tRNA(Ala). Also edits incorrectly charged Ser-tRNA(Ala) and Gly-tRNA(Ala) via its editing domain. This is Alanine--tRNA ligase from Acetivibrio thermocellus (strain ATCC 27405 / DSM 1237 / JCM 9322 / NBRC 103400 / NCIMB 10682 / NRRL B-4536 / VPI 7372) (Clostridium thermocellum).